The primary structure comprises 413 residues: Protein MANNAN SYNTHESIS-RELATED (413 aa).

Topologically, residues 1-5 (MNSME) are cytoplasmic. A helical; Signal-anchor for type II membrane protein transmembrane segment spans residues 6–26 (IRQAFAGLLTLSMFIMLGNMI). Over 27 to 413 (KKDHFDYPAE…KNHLAYKCFC (387 aa)) the chain is Lumenal. A glycan (N-linked (GlcNAc...) asparagine) is linked at Asn207. 255–257 (DLR) contacts substrate.

The protein belongs to the glycosyltransferase GT106 family. In terms of tissue distribution, highly and specifically expressed in the endosperm.

Its subcellular location is the golgi apparatus membrane. Its pathway is glycan biosynthesis. In terms of biological role, glycosyltransferase involved in mannan biosynthesis. The protein is Protein MANNAN SYNTHESIS-RELATED of Trigonella foenum-graecum (Fenugreek).